Reading from the N-terminus, the 400-residue chain is Peroxisome biogenesis factor 16 (400 aa).

The tract at residues 176 to 226 (QKQFQNKRPAVTMSINNNNNINNNDNNNINNNNNTNDDNFNNNNNNNNNRR) is disordered. Over residues 190 to 224 (INNNNNINNNDNNNINNNNNTNDDNFNNNNNNNNN) the composition is skewed to low complexity.

Belongs to the peroxin-16 family.

It localises to the cytoplasm. In terms of biological role, required for peroxisome membrane biogenesis. The polypeptide is Peroxisome biogenesis factor 16 (pex16) (Dictyostelium discoideum (Social amoeba)).